Reading from the N-terminus, the 676-residue chain is Transcription factor RLM1 (676 aa).

In terms of domain architecture, MADS-box spans 3 to 57 (RRKIEIQRISDDRNRAVTFIKRKAGLFKKAHELSVLCQVDIAVIILGSNNTFYEF). The segment at residues 58 to 87 (SSVDTNDLIYHYQNDKNLLHEVKDPSDYGD) is a DNA-binding region (mef2-type). The segment covering 103 to 120 (SSMSNKPSKSNVKGMNQS) has biased composition (polar residues). The interval 103 to 156 (SSMSNKPSKSNVKGMNQSENDDDENNDEDDDDHGNFERNSNMHSNKKASDKNIP) is disordered. Residue serine 120 is modified to Phosphoserine. A compositionally biased stretch (acidic residues) spans 121–134 (ENDDDENNDEDDDD). At serine 164 the chain carries Phosphoserine. The span at 173–183 (DGSEQNKRHPE) shows a compositional bias: basic and acidic residues. Disordered stretches follow at residues 173–192 (DGSEQNKRHPENALPPLQHL), 202–318 (ISRT…RRKL), 330–424 (NNNF…PFGS), 472–514 (KKQS…VHDL), and 532–631 (MGPN…NSST). The span at 260–276 (ISPNKFSKPFTNASSRT) shows a compositional bias: polar residues. Low complexity predominate over residues 284-295 (NNSGSNNNDNSN). The span at 296 to 312 (YTQSPSNSLEDSIQQTV) shows a compositional bias: polar residues. Composition is skewed to low complexity over residues 334 to 359 (SSNSAIPSEPSSASSTSANGNSMGSS), 368 to 381 (SRSSKISPLSASAS), and 399 to 417 (PNANAPNGSNNGNGSNNNN). A phosphoserine mark is found at serine 374 and serine 377. Positions 472-506 (KKQSQTVPLTTTLTGRPPSTFSGPETSNGPPTGSL) are enriched in polar residues. Residues 539-604 (PGNTNNPGTF…NSNNSYYSNN (66 aa)) are compositionally biased toward low complexity. Polar residues predominate over residues 621–631 (GDSNNQSNSST).

Belongs to the MEF2 family. In terms of assembly, can heterodimerize with SPM1. Interacts with KDX1 and SLT2. Phosphorylated by SLT2.

The protein resides in the nucleus. Its function is as follows. May function as a transcription factor downstream of MPK1 that is subject to activation by the MPK1 mitogen-activated protein kinase pathway. Binds to the DNA sequence 5'-CTA[TA](4)TAG-3'. At least some RML1 target genes are involved in cell wall biosynthesis. This chain is Transcription factor RLM1 (RLM1), found in Saccharomyces cerevisiae (strain ATCC 204508 / S288c) (Baker's yeast).